Reading from the N-terminus, the 96-residue chain is Co-chaperonin GroES (96 aa).

This sequence belongs to the GroES chaperonin family. In terms of assembly, heptamer of 7 subunits arranged in a ring. Interacts with the chaperonin GroEL.

It localises to the cytoplasm. In terms of biological role, together with the chaperonin GroEL, plays an essential role in assisting protein folding. The GroEL-GroES system forms a nano-cage that allows encapsulation of the non-native substrate proteins and provides a physical environment optimized to promote and accelerate protein folding. GroES binds to the apical surface of the GroEL ring, thereby capping the opening of the GroEL channel. This Shewanella pealeana (strain ATCC 700345 / ANG-SQ1) protein is Co-chaperonin GroES.